An 805-amino-acid polypeptide reads, in one-letter code: Mitochondrial intermediate peptidase (805 aa).

Residues 1–25 constitute a mitochondrion transit peptide; that stretch reads MIQPLVKASRPRLWVCSDCLLRRTL. H578 lines the Zn(2+) pocket. E579 is an active-site residue. Residues H582 and H585 each contribute to the Zn(2+) site.

The protein belongs to the peptidase M3 family. Zn(2+) serves as cofactor.

The protein localises to the mitochondrion matrix. The enzyme catalyses Release of an N-terminal octapeptide as second stage of processing of some proteins imported into the mitochondrion.. Its function is as follows. Cleaves proteins, imported into the mitochondrion, to their mature size. While most mitochondrial precursor proteins are processed to the mature form in one step by mitochondrial processing peptidase (MPP), the sequential cleavage by MIP of an octapeptide after initial processing by MPP is a required step for a subgroup of nuclear-encoded precursor proteins destined for the matrix or the inner membrane. In Neurospora crassa (strain ATCC 24698 / 74-OR23-1A / CBS 708.71 / DSM 1257 / FGSC 987), this protein is Mitochondrial intermediate peptidase (oct-1).